Reading from the N-terminus, the 229-residue chain is Wtf element wtf14 (229 aa).

Residues 1–26 (MENNHHLAKDSLDELNPKRGKGEHET) are compositionally biased toward basic and acidic residues. The tract at residues 1 to 27 (MENNHHLAKDSLDELNPKRGKGEHETQ) is disordered. The next 4 helical transmembrane spans lie at 71–91 (IPAVLLPVFVINIALFKYLVF), 100–120 (VLFGLGNGGINIFSMWLLLAT), 151–171 (LYAILKLTFVNAFAIPLLMFF), and 188–208 (VIGVMLNVAYFIIEIENPGLF).

Belongs to the WTF family.

Its subcellular location is the endoplasmic reticulum membrane. In terms of biological role, may act in meiotic drive. This Schizosaccharomyces pombe (strain 972 / ATCC 24843) (Fission yeast) protein is Wtf element wtf14.